Reading from the N-terminus, the 25-residue chain is Granule-bound starch synthase 1, chloroplastic/amyloplastic (25 aa).

An ADP-alpha-D-glucose-binding site is contributed by lysine 16.

This sequence belongs to the glycosyltransferase 1 family. Bacterial/plant glycogen synthase subfamily. As to expression, expressed in endosperm.

It localises to the plastid. The protein localises to the chloroplast. The protein resides in the amyloplast. It catalyses the reaction an NDP-alpha-D-glucose + [(1-&gt;4)-alpha-D-glucosyl](n) = [(1-&gt;4)-alpha-D-glucosyl](n+1) + a ribonucleoside 5'-diphosphate + H(+). It participates in glycan biosynthesis; starch biosynthesis. Functionally, required for the synthesis of amylose in endosperm. The chain is Granule-bound starch synthase 1, chloroplastic/amyloplastic from Fagopyrum esculentum (Common buckwheat).